Here is a 367-residue protein sequence, read N- to C-terminus: MSLADKVLAVNNDLPIRSTQPVHSGKVRSVYWLTESDSRRLIAEKGYNVAADAPLAIMVISDRISAFDCIWHAEGGMNGVPGKGAALNAISNHWFKLFKDQGLADSHILDIPHPLVWIVQKARPVMIEAICRQYITGSMWRAYEKGEREFCGIEIADGLKKDQKLPELLTTPSTKGILEGIPGVAAVDDVNITRQNIEDNFAAFNFTTTQDIALYEKLLKEGFNVISHELAKIGQIFVDTKFEFGYVKDKAGNEKLIYMDEVGTPDSSRIWDAAEYQKGNIVENSKEDFRQLLLNHFPDPDILLNKDRMAERSDLAKNNALPAAVLMKISATYISIAEKIIGHKITLSDNPKAEIIEILDRQYGLID.

Belongs to the SAICAR synthetase family.

The enzyme catalyses 5-amino-1-(5-phospho-D-ribosyl)imidazole-4-carboxylate + L-aspartate + ATP = (2S)-2-[5-amino-1-(5-phospho-beta-D-ribosyl)imidazole-4-carboxamido]succinate + ADP + phosphate + 2 H(+). The protein operates within purine metabolism; IMP biosynthesis via de novo pathway; 5-amino-1-(5-phospho-D-ribosyl)imidazole-4-carboxamide from 5-amino-1-(5-phospho-D-ribosyl)imidazole-4-carboxylate: step 1/2. The sequence is that of Phosphoribosylaminoimidazole-succinocarboxamide synthase from Psychromonas ingrahamii (strain DSM 17664 / CCUG 51855 / 37).